Here is an 89-residue protein sequence, read N- to C-terminus: Small ribosomal subunit protein eS25A (89 aa).

Belongs to the eukaryotic ribosomal protein eS25 family. Component of the small ribosomal subunit (SSU). Mature yeast ribosomes consist of a small (40S) and a large (60S) subunit. The 40S small subunit contains 1 molecule of ribosomal RNA (18S rRNA) and at least 33 different proteins. The large 60S subunit contains 3 rRNA molecules (25S, 5.8S and 5S rRNA) and at least 46 different proteins.

The protein localises to the cytoplasm. Functionally, component of the ribosome, a large ribonucleoprotein complex responsible for the synthesis of proteins in the cell. The small ribosomal subunit (SSU) binds messenger RNAs (mRNAs) and translates the encoded message by selecting cognate aminoacyl-transfer RNA (tRNA) molecules. The large subunit (LSU) contains the ribosomal catalytic site termed the peptidyl transferase center (PTC), which catalyzes the formation of peptide bonds, thereby polymerizing the amino acids delivered by tRNAs into a polypeptide chain. The nascent polypeptides leave the ribosome through a tunnel in the LSU and interact with protein factors that function in enzymatic processing, targeting, and the membrane insertion of nascent chains at the exit of the ribosomal tunnel. This is Small ribosomal subunit protein eS25A (rps2502) from Schizosaccharomyces pombe (strain 972 / ATCC 24843) (Fission yeast).